We begin with the raw amino-acid sequence, 622 residues long: Leucine-rich repeat-containing protein 70 (622 aa).

The first 31 residues, 1–31 (MCGLQFSLPCLRLFLVVTCYLLLLLHKEILG), serve as a signal peptide directing secretion. The LRRNT domain occupies 32-60 (CSSVCQLCTGRQINCRNLGLSSIPKNFPE). 12 LRR repeats span residues 61–82 (STVF…ELTG), 85–106 (SLVA…AFVQ), 109–130 (HLYF…IFKG), 133–154 (NLRN…VFND), 157–178 (SVQY…TFVG), 181–202 (ALRI…GFQH), 205–226 (NLAC…AFEV), 229–250 (SLRR…AFKG), 253–274 (NLEY…GFSG), 277–298 (NLKH…TFSL), 301–322 (NLIY…TFEN), and 326–347 (SLKI…VLKP). N-linked (GlcNAc...) asparagine glycosylation occurs at Asn-215. N-linked (GlcNAc...) asparagine glycosylation occurs at Asn-266. Asn-331 and Asn-400 each carry an N-linked (GlcNAc...) asparagine glycan. The LRRCT domain maps to 359–406 (NPWECNCKLLGLRDWLASSAITLNIYCQNPPSMRGRALRYINITNCVT). A helical transmembrane segment spans residues 527–547 (AFDILLAFFILACVLIIFLIY).

In terms of tissue distribution, expressed at low levels in many tissues, including smooth muscle, brain, uterus, pancreas, cartilage, adipose, spleen and testis.

The protein resides in the membrane. In terms of biological role, renders cells highly sensitive to the activation by cytokines and lipopolysaccharide (LPS). The polypeptide is Leucine-rich repeat-containing protein 70 (LRRC70) (Homo sapiens (Human)).